The sequence spans 586 residues: uncharacterized protein (586 aa).

The region spanning 29–312 (YGIAIGSMVV…LARMRISLES (284 aa)) is the ABC transmembrane type-1 domain. Transmembrane regions (helical) follow at residues 30–50 (GIAIGSMVVVAVMTSASAWIM), 66–86 (VFGVAVTVAIIFAVKGLATYV), 162–184 (MVIQQPLLSLVSAAVGPGAILGV), and 256–276 (IMETLSGFAIAGVIALSGVLV). Residues 346–580 (IRFKDVNFSY…DGVYRRLYEL (235 aa)) form the ABC transporter domain. 379–386 (GPSGAGKS) contributes to the ATP binding site.

Belongs to the ABC transporter superfamily.

It localises to the cell membrane. This is an uncharacterized protein from Sinorhizobium fredii (strain NBRC 101917 / NGR234).